Reading from the N-terminus, the 1487-residue chain is Protein clueless (1487 aa).

Disordered regions lie at residues 1-94 and 110-140; these read MALE…NGDA and GATA…EAAA. Basic residues predominate over residues 56 to 65; that stretch reads TKKKGKKNRN. Residues 111–126 are compositionally biased toward low complexity; the sequence is ATAAAGATEAAAEVGS. Ser284 is subject to Phosphoserine. In terms of domain architecture, Clu spans 438-680; the sequence is RAEDAFSSKL…RTFPPDVNFL (243 aa). Positions 739-785 are enriched in basic and acidic residues; it reads QAEKELPSITEKQEEPEKEQAEKSSAEQPEKEKEKEKDKEDEQKESK. Disordered stretches follow at residues 739–794 and 980–1040; these read QAEK…TKSA and VSSE…TAST. A compositionally biased stretch (basic residues) spans 988–1005; sequence KQSRNNGGKHNKHNKSNK. The span at 1009–1019 shows a compositional bias: polar residues; the sequence is PQSTSAAAATQ. A compositionally biased stretch (low complexity) spans 1020 to 1040; it reads NGHSSTAANGSANSAANTAST. TPR repeat units lie at residues 1140-1173, 1266-1299, and 1301-1334; these read AYNF…LNNV, ALID…NLKY, and GNKA…EKET. A disordered region spans residues 1456–1487; it reads DTEQPKEGSEVEGATATQLTNGSEDSTTTVSS. Polar residues predominate over residues 1470–1487; the sequence is TATQLTNGSEDSTTTVSS.

The protein belongs to the CLU family.

The protein resides in the cytoplasm. Its function is as follows. mRNA-binding protein involved in proper cytoplasmic distribution of mitochondria. This Drosophila mojavensis (Fruit fly) protein is Protein clueless.